The chain runs to 155 residues: Large ribosomal subunit protein eL24 (155 aa).

Residues 119 to 155 (VKAAKKAAAPAPAKKSAPKQKAAKVTQKAAPRVGGKR) are disordered. Over residues 124–133 (KAAAPAPAKK) the composition is skewed to low complexity.

This sequence belongs to the eukaryotic ribosomal protein eL24 family.

The chain is Large ribosomal subunit protein eL24 (RpL24) from Drosophila melanogaster (Fruit fly).